Consider the following 454-residue polypeptide: Tol-Pal system protein TolB (454 aa).

The N-terminal stretch at 1–30 (MNDARSITRRRFMTLTGSGLAMLGGGHAFA) is a signal peptide.

This sequence belongs to the TolB family. As to quaternary structure, the Tol-Pal system is composed of five core proteins: the inner membrane proteins TolA, TolQ and TolR, the periplasmic protein TolB and the outer membrane protein Pal. They form a network linking the inner and outer membranes and the peptidoglycan layer.

It is found in the periplasm. Its function is as follows. Part of the Tol-Pal system, which plays a role in outer membrane invagination during cell division and is important for maintaining outer membrane integrity. The polypeptide is Tol-Pal system protein TolB (Bradyrhizobium diazoefficiens (strain JCM 10833 / BCRC 13528 / IAM 13628 / NBRC 14792 / USDA 110)).